Reading from the N-terminus, the 368-residue chain is tRNA/tmRNA (uracil-C(5))-methyltransferase (368 aa).

S-adenosyl-L-methionine is bound by residues Q186, Y214, N219, E235, and D295. Residue C320 is the Nucleophile of the active site. The active-site Proton acceptor is the E354.

Belongs to the class I-like SAM-binding methyltransferase superfamily. RNA M5U methyltransferase family. TrmA subfamily.

The enzyme catalyses uridine(54) in tRNA + S-adenosyl-L-methionine = 5-methyluridine(54) in tRNA + S-adenosyl-L-homocysteine + H(+). It carries out the reaction uridine(341) in tmRNA + S-adenosyl-L-methionine = 5-methyluridine(341) in tmRNA + S-adenosyl-L-homocysteine + H(+). In terms of biological role, dual-specificity methyltransferase that catalyzes the formation of 5-methyluridine at position 54 (m5U54) in all tRNAs, and that of position 341 (m5U341) in tmRNA (transfer-mRNA). This is tRNA/tmRNA (uracil-C(5))-methyltransferase from Aromatoleum aromaticum (strain DSM 19018 / LMG 30748 / EbN1) (Azoarcus sp. (strain EbN1)).